Consider the following 743-residue polypeptide: Catalase-peroxidase (743 aa).

The interval 1 to 22 (MEKQSNDAAVAGAPNDHGAAKC) is disordered. A cross-link (tryptophyl-tyrosyl-methioninium (Trp-Tyr) (with M-253)) is located at residues 105–227 (WHSAGTYRIT…LGAVQMGLIY (123 aa)). His106 functions as the Proton acceptor in the catalytic mechanism. A cross-link (tryptophyl-tyrosyl-methioninium (Tyr-Met) (with W-105)) is located at residues 227–253 (YVNPEGPNGNPDPVAAAKDIRETFFRM). Heme b is bound at residue His268.

The protein belongs to the peroxidase family. Peroxidase/catalase subfamily. As to quaternary structure, homodimer or homotetramer. Heme b is required as a cofactor. In terms of processing, formation of the three residue Trp-Tyr-Met cross-link is important for the catalase, but not the peroxidase activity of the enzyme.

It carries out the reaction H2O2 + AH2 = A + 2 H2O. It catalyses the reaction 2 H2O2 = O2 + 2 H2O. Its function is as follows. Bifunctional enzyme with both catalase and broad-spectrum peroxidase activity. In Solibacter usitatus (strain Ellin6076), this protein is Catalase-peroxidase.